A 266-amino-acid chain; its full sequence is Small ribosomal subunit protein mS42 (266 aa).

This sequence belongs to the mitochondrion-specific ribosomal protein mS42 family. As to quaternary structure, component of the mitochondrial small ribosomal subunit (mt-SSU). Mature yeast 74S mitochondrial ribosomes consist of a small (37S) and a large (54S) subunit. The 37S small subunit contains a 15S ribosomal RNA (15S mt-rRNA) and 34 different proteins. The 54S large subunit contains a 21S rRNA (21S mt-rRNA) and 46 different proteins. mS42 forms a heterodimer with mS43, building a large protuberance adjacent to the mRNA channel exit in the mt-SSU body.

The protein resides in the mitochondrion. Its function is as follows. Component of the mitochondrial ribosome (mitoribosome), a dedicated translation machinery responsible for the synthesis of mitochondrial genome-encoded proteins, including at least some of the essential transmembrane subunits of the mitochondrial respiratory chain. The mitoribosomes are attached to the mitochondrial inner membrane and translation products are cotranslationally integrated into the membrane. The protein is Small ribosomal subunit protein mS42 (RSM26) of Saccharomyces cerevisiae (strain ATCC 204508 / S288c) (Baker's yeast).